A 283-amino-acid polypeptide reads, in one-letter code: tRNA pseudouridine synthase B (283 aa).

Asp-38 acts as the Nucleophile in catalysis.

This sequence belongs to the pseudouridine synthase TruB family. Type 1 subfamily.

The catalysed reaction is uridine(55) in tRNA = pseudouridine(55) in tRNA. Its function is as follows. Responsible for synthesis of pseudouridine from uracil-55 in the psi GC loop of transfer RNAs. This is tRNA pseudouridine synthase B from Aster yellows witches'-broom phytoplasma (strain AYWB).